The sequence spans 462 residues: Glutamate--tRNA ligase 1 (462 aa).

The 'HIGH' region motif lies at 8–18; sequence PSPTGYLHIGG. The 'KMSKS' region signature appears at 237–241; the sequence is KLSKR. Lys-240 serves as a coordination point for ATP.

It belongs to the class-I aminoacyl-tRNA synthetase family. Glutamate--tRNA ligase type 1 subfamily. As to quaternary structure, monomer.

The protein resides in the cytoplasm. It carries out the reaction tRNA(Glu) + L-glutamate + ATP = L-glutamyl-tRNA(Glu) + AMP + diphosphate. Functionally, catalyzes the attachment of glutamate to tRNA(Glu) in a two-step reaction: glutamate is first activated by ATP to form Glu-AMP and then transferred to the acceptor end of tRNA(Glu). The polypeptide is Glutamate--tRNA ligase 1 (Campylobacter hominis (strain ATCC BAA-381 / DSM 21671 / CCUG 45161 / LMG 19568 / NCTC 13146 / CH001A)).